The chain runs to 169 residues: S-ribosylhomocysteine lyase (169 aa).

Fe cation contacts are provided by H54, H58, and C128.

The protein belongs to the LuxS family. As to quaternary structure, homodimer. Requires Fe cation as cofactor.

The enzyme catalyses S-(5-deoxy-D-ribos-5-yl)-L-homocysteine = (S)-4,5-dihydroxypentane-2,3-dione + L-homocysteine. Involved in the synthesis of autoinducer 2 (AI-2) which is secreted by bacteria and is used to communicate both the cell density and the metabolic potential of the environment. The regulation of gene expression in response to changes in cell density is called quorum sensing. Catalyzes the transformation of S-ribosylhomocysteine (RHC) to homocysteine (HC) and 4,5-dihydroxy-2,3-pentadione (DPD). This Psychromonas ingrahamii (strain DSM 17664 / CCUG 51855 / 37) protein is S-ribosylhomocysteine lyase.